A 130-amino-acid chain; its full sequence is Small ribosomal subunit protein uS11 (130 aa).

It belongs to the universal ribosomal protein uS11 family. Part of the 30S ribosomal subunit. Interacts with proteins S7 and S18. Binds to IF-3.

Functionally, located on the platform of the 30S subunit, it bridges several disparate RNA helices of the 16S rRNA. Forms part of the Shine-Dalgarno cleft in the 70S ribosome. This Kosmotoga olearia (strain ATCC BAA-1733 / DSM 21960 / TBF 19.5.1) protein is Small ribosomal subunit protein uS11.